The sequence spans 385 residues: Hsp70/Hsp90 co-chaperone CNS1 (385 aa).

Positions 1–37 (MSSVNANGGYTKPQKYVPGPGDPELPPQLSEFKDKTS) are disordered. 3 TPR repeats span residues 83–116 (AENF…ECED), 121–154 (ESLY…NPKN), and 155–189 (VKCY…DPEN).

Belongs to the TTC4 family. Monomer. Component of Hsp70 and Hsp90 chaperone complexes. Interacts (via TPR repeats) with HSC82 and HSP82 (via C-terminal MEEVD pentapeptide). Interacts with CPR7, SSA1 and SPI1.

It localises to the cytoplasm. Functionally, co-chaperone that binds to the molecular chaperones Hsp90 (HSC82 and HSP82) and Hsp70 (SSA1). Stimulates SSA1 ATPase activity, but not Hsp90 ATPase activity. Involved in only a subset of Hsp90 functions. The polypeptide is Hsp70/Hsp90 co-chaperone CNS1 (CNS1) (Saccharomyces cerevisiae (strain ATCC 204508 / S288c) (Baker's yeast)).